Consider the following 694-residue polypeptide: Glycine--tRNA ligase beta subunit (694 aa).

This sequence belongs to the class-II aminoacyl-tRNA synthetase family. Tetramer of two alpha and two beta subunits.

It localises to the cytoplasm. It carries out the reaction tRNA(Gly) + glycine + ATP = glycyl-tRNA(Gly) + AMP + diphosphate. The chain is Glycine--tRNA ligase beta subunit from Moorella thermoacetica (strain ATCC 39073 / JCM 9320).